We begin with the raw amino-acid sequence, 246 residues long: 1-(5-phosphoribosyl)-5-[(5-phosphoribosylamino)methylideneamino] imidazole-4-carboxamide isomerase (246 aa).

Residue D10 is the Proton acceptor of the active site. The Proton donor role is filled by D135.

It belongs to the HisA/HisF family.

Its subcellular location is the cytoplasm. The enzyme catalyses 1-(5-phospho-beta-D-ribosyl)-5-[(5-phospho-beta-D-ribosylamino)methylideneamino]imidazole-4-carboxamide = 5-[(5-phospho-1-deoxy-D-ribulos-1-ylimino)methylamino]-1-(5-phospho-beta-D-ribosyl)imidazole-4-carboxamide. The protein operates within amino-acid biosynthesis; L-histidine biosynthesis; L-histidine from 5-phospho-alpha-D-ribose 1-diphosphate: step 4/9. The protein is 1-(5-phosphoribosyl)-5-[(5-phosphoribosylamino)methylideneamino] imidazole-4-carboxamide isomerase of Methanococcoides burtonii (strain DSM 6242 / NBRC 107633 / OCM 468 / ACE-M).